The sequence spans 625 residues: Coagulation factor XI (625 aa).

The first 18 residues, 1–18, serve as a signal peptide directing secretion; that stretch reads MTLLYQMVHFALFASVAG. Apple domains are found at residues 20-103, 110-193, 200-283, and 291-374; these read CVTT…SKQC, CSKD…LKSC, CIRD…LQHC, and CHSS…LRLC. Intrachain disulfides connect Cys-20–Cys-103, Cys-46–Cys-76, Cys-50–Cys-56, Cys-110–Cys-193, Cys-136–Cys-165, Cys-140–Cys-146, Cys-200–Cys-283, Cys-226–Cys-255, Cys-230–Cys-236, Cys-291–Cys-374, Cys-317–Cys-346, Cys-321–Cys-327, Cys-380–Cys-500, Cys-416–Cys-432, Cys-514–Cys-581, Cys-545–Cys-560, and Cys-571–Cys-599. Asn-90 and Asn-126 each carry an N-linked (GlcNAc...) asparagine glycan. Positions 388–623 constitute a Peptidase S1 domain; it reads IVGGTQSVHG…YVDWILEKTQ (236 aa). The Charge relay system role is filled by His-431. Asn-450 carries N-linked (GlcNAc...) asparagine glycosylation. The active-site Charge relay system is the Asp-480. Asn-491 carries N-linked (GlcNAc...) asparagine glycosylation. Heparin is bound at residue 547–550; that stretch reads AGYR. Ser-575 functions as the Charge relay system in the catalytic mechanism.

Belongs to the peptidase S1 family. Plasma kallikrein subfamily. In terms of assembly, homodimer; disulfide-linked. After activation the heavy and light chains are also linked by a disulfide bond. Interacts (activated) with F9 (inactive and activated) in calcium-dependent manner. Forms a heterodimer with SERPINA5. Activated by factor XIIa (or XII), which cleaves each polypeptide after Arg-387 into the light chain, which contains the active site, and the heavy chain, which associates with high molecular weight (HMW) kininogen. Activated by F12 (activated); the presence of negatively charged surfaces accelerates activation. Activated by F2 (thrombin); the presence of negatively charged surfaces, such as polyphosphate and dextran sulfate, strongly accelerates activation. Autoactivated; the presence of negatively charged surfaces, such as polyphosphate and dextran sulfate, accelerates autoactivation and autolysis. Post-translationally, N-glycosylated on both chains. N-glycosylated sites mainly consist of nonfucosylated sialylated biantennary (in high abundance) and/or triantennary (in low abundance) complex structures.

It is found in the secreted. The enzyme catalyses Selective cleavage of Arg-|-Ala and Arg-|-Val bonds in factor IX to form factor IXa.. Inhibited by SERPINA5. Factor XI triggers the middle phase of the intrinsic pathway of blood coagulation by activating factor IX. This chain is Coagulation factor XI (F11), found in Bos taurus (Bovine).